A 65-amino-acid polypeptide reads, in one-letter code: Large ribosomal subunit protein bL28 (65 aa).

A disordered region spans residues 1–21 (MAKKDQLTLRGPLYGNNRSHS).

Belongs to the bacterial ribosomal protein bL28 family.

The protein is Large ribosomal subunit protein bL28 of Mycoplasma pneumoniae (strain ATCC 29342 / M129 / Subtype 1) (Mycoplasmoides pneumoniae).